Consider the following 715-residue polypeptide: Polyribonucleotide nucleotidyltransferase (715 aa).

Aspartate 487 and aspartate 493 together coordinate Mg(2+). Residues proline 554–isoleucine 613 enclose the KH domain. The S1 motif domain occupies glycine 623 to lysine 691.

Belongs to the polyribonucleotide nucleotidyltransferase family. Requires Mg(2+) as cofactor.

The protein localises to the cytoplasm. The enzyme catalyses RNA(n+1) + phosphate = RNA(n) + a ribonucleoside 5'-diphosphate. Functionally, involved in mRNA degradation. Catalyzes the phosphorolysis of single-stranded polyribonucleotides processively in the 3'- to 5'-direction. This Dechloromonas aromatica (strain RCB) protein is Polyribonucleotide nucleotidyltransferase.